We begin with the raw amino-acid sequence, 915 residues long: Isoleucine--tRNA ligase (915 aa).

Positions 57–67 match the 'HIGH' region motif; it reads PYANGNLHMGH. Glu554 is a binding site for L-isoleucyl-5'-AMP. The 'KMSKS' region motif lies at 595 to 599; the sequence is KMSKS. Lys598 lines the ATP pocket. 4 residues coordinate Zn(2+): Cys885, Cys888, Cys905, and Cys908.

This sequence belongs to the class-I aminoacyl-tRNA synthetase family. IleS type 1 subfamily. As to quaternary structure, monomer. Zn(2+) is required as a cofactor.

The protein localises to the cytoplasm. The catalysed reaction is tRNA(Ile) + L-isoleucine + ATP = L-isoleucyl-tRNA(Ile) + AMP + diphosphate. In terms of biological role, catalyzes the attachment of isoleucine to tRNA(Ile). As IleRS can inadvertently accommodate and process structurally similar amino acids such as valine, to avoid such errors it has two additional distinct tRNA(Ile)-dependent editing activities. One activity is designated as 'pretransfer' editing and involves the hydrolysis of activated Val-AMP. The other activity is designated 'posttransfer' editing and involves deacylation of mischarged Val-tRNA(Ile). In Staphylococcus carnosus (strain TM300), this protein is Isoleucine--tRNA ligase.